Here is a 79-residue protein sequence, read N- to C-terminus: MAAHKMSLTSLFFVSIVIVLSLFSGFGEGRYIKYRAIAKDRVPDCTQDPKNCVRVPVNQYHLPPGCQNTTHCYREKYHI.

A signal peptide spans 1-29 (MAAHKMSLTSLFFVSIVIVLSLFSGFGEG). Disulfide bonds link C45–C52 and C66–C72. The N-linked (GlcNAc...) asparagine glycan is linked to N68.

This sequence belongs to the plant rapid alkalinization factor (RALF) family.

The protein localises to the secreted. Functionally, cell signaling peptide that may regulate plant stress, growth, and development. Mediates a rapid alkalinization of extracellular space by mediating a transient increase in the cytoplasmic Ca(2+) concentration leading to a calcium-dependent signaling events through a cell surface receptor and a concomitant activation of some intracellular mitogen-activated protein kinases. In Arabidopsis thaliana (Mouse-ear cress), this protein is Protein RALF-like 35.